The chain runs to 152 residues: Ribosome maturation factor RimP (152 aa).

Belongs to the RimP family.

Its subcellular location is the cytoplasm. In terms of biological role, required for maturation of 30S ribosomal subunits. The chain is Ribosome maturation factor RimP from Sodalis glossinidius (strain morsitans).